The chain runs to 230 residues: MEDIKIKEIFENIYEVDLGDGLKRIATKSIVKGKKVYDEKIIKIGDEEYRIWNPNKSKLAAAIIKGLKVMPIKRDSKILYLGASAGTTPSHVADIADKGIVYAIEYAPRIMRELLDACAERENIIPILGDANKPQEYANIVEKVDVIYEDVAQPNQAEILIKNAKWFLKKGGYGMIAIKARSIDVTKDPKEIFKEQKEILEAGGFKIVDEVDIEPFEKDHVMFVGIWEGK.

S-adenosyl-L-methionine contacts are provided by residues 87 to 88 (TT), 105 to 106 (EY), 130 to 131 (DA), and 150 to 153 (DVAQ).

Interacts with nop5. Component of box C/D small ribonucleoprotein (sRNP) particles that contain rpl7ae, FlpA and nop5, plus a guide RNA.

Functionally, involved in pre-rRNA and tRNA processing. Utilizes the methyl donor S-adenosyl-L-methionine to catalyze the site-specific 2'-hydroxyl methylation of ribose moieties in rRNA and tRNA. Site specificity is provided by a guide RNA that base pairs with the substrate. Methylation occurs at a characteristic distance from the sequence involved in base pairing with the guide RNA. The protein is Fibrillarin-like rRNA/tRNA 2'-O-methyltransferase of Methanocaldococcus jannaschii (strain ATCC 43067 / DSM 2661 / JAL-1 / JCM 10045 / NBRC 100440) (Methanococcus jannaschii).